We begin with the raw amino-acid sequence, 258 residues long: Peptidase inhibitor 15 (258 aa).

A signal peptide spans 1–19 (MIAISAVSSALLFSLLCEA). Residues 20–60 (STVVLLNSTDSSPPTNNFTDIEAALKAQLDSADIPKARRKR) constitute a propeptide that is removed on maturation. Residues N26, N36, and N124 are each glycosylated (N-linked (GlcNAc...) asparagine). The SCP domain maps to 71-211 (LDYHNQVRGK…RRAVYLVCNY (141 aa)).

It belongs to the CRISP family. N-glycosylated. Weakly expressed. Expressed at low level in prostate, mammary gland, salivary gland and thyroid gland.

It localises to the secreted. In terms of biological role, serine protease inhibitor which displays weak inhibitory activity against trypsin. May play a role in facial patterning during embryonic development. This chain is Peptidase inhibitor 15 (PI15), found in Homo sapiens (Human).